We begin with the raw amino-acid sequence, 124 residues long: MLLYRLDIADFRVWVSIGVSEQERHYPQPVLVSLSLFFKEEPKACSTDKVSDSVCYAELVSLIEEVATNNPCALIERLAKVLLEKIEKALAGQVSRIDLRVSKERPPIPDLLSPVSFSISREVP.

Substrate is bound by residues Glu-23, Tyr-56, and 75-76; that span reads IE. Lys-103 acts as the Proton donor/acceptor in catalysis.

Belongs to the DHNA family.

The enzyme catalyses 7,8-dihydroneopterin = 6-hydroxymethyl-7,8-dihydropterin + glycolaldehyde. Its pathway is cofactor biosynthesis; tetrahydrofolate biosynthesis; 2-amino-4-hydroxy-6-hydroxymethyl-7,8-dihydropteridine diphosphate from 7,8-dihydroneopterin triphosphate: step 3/4. Catalyzes the conversion of 7,8-dihydroneopterin to 6-hydroxymethyl-7,8-dihydropterin. The chain is Probable dihydroneopterin aldolase (folB) from Chlamydia trachomatis serovar D (strain ATCC VR-885 / DSM 19411 / UW-3/Cx).